The following is a 259-amino-acid chain: tRNA (guanine-N(7)-)-methyltransferase (259 aa).

Residues 1–36 (MTFPSHNPPETGHPSAAPDEALPAAEAPVPGDPEAR) are disordered. Low complexity predominate over residues 14–29 (PSAAPDEALPAAEAPV). Glu91, Glu116, Asp143, and Asp166 together coordinate S-adenosyl-L-methionine. Asp166 is an active-site residue. Residues Lys170, Asp202, and 237-240 (TKFE) each bind substrate.

This sequence belongs to the class I-like SAM-binding methyltransferase superfamily. TrmB family.

The enzyme catalyses guanosine(46) in tRNA + S-adenosyl-L-methionine = N(7)-methylguanosine(46) in tRNA + S-adenosyl-L-homocysteine. The protein operates within tRNA modification; N(7)-methylguanine-tRNA biosynthesis. Its function is as follows. Catalyzes the formation of N(7)-methylguanine at position 46 (m7G46) in tRNA. In Aromatoleum aromaticum (strain DSM 19018 / LMG 30748 / EbN1) (Azoarcus sp. (strain EbN1)), this protein is tRNA (guanine-N(7)-)-methyltransferase.